A 204-amino-acid chain; its full sequence is Tetraspanin-13 (204 aa).

Over 1–19 the chain is Cytoplasmic; it reads MVCGGFACSKNCLCALNLL. Residues 20 to 40 form a helical membrane-spanning segment; sequence YTLVSLLLIGIAAWGIGFGLI. The Extracellular segment spans residues 41–44; sequence SSLR. Residues 45-65 form a helical membrane-spanning segment; it reads VVGVVIAVGIFLFLIALVGLI. The Cytoplasmic portion of the chain corresponds to 66–72; the sequence is GAVKHHQ. The chain crosses the membrane as a helical span at residues 73-93; sequence VLLFFYMIILLLVFIVQFSVS. At 94-167 the chain is on the extracellular side; the sequence is CACLALNQEQ…IGRYAGEVLR (74 aa). 2 N-linked (GlcNAc...) asparagine glycosylation sites follow: Asn113 and Asn137. At Ser143 the chain carries Phosphoserine. Residues 168 to 188 traverse the membrane as a helical segment; sequence FVGGIGLFFSFTEILGVWLTY. Residues 189–204 lie on the Cytoplasmic side of the membrane; it reads RYRNQKDPRANPSAFL.

The protein belongs to the tetraspanin (TM4SF) family.

Its subcellular location is the membrane. The sequence is that of Tetraspanin-13 (TSPAN13) from Bos taurus (Bovine).